The following is a 458-amino-acid chain: MELPPGPRDDPHAWDDDSDPELEPDTDAQAEAYVARLLSPPKLGLAPPRAPPLPAPTVSFGSLEPRAASKGPTVAVPGLLSLPPELLLEICAYLDARLVLHVLPRVCHALRDLVRDRVTWRLRAQRRVRAPYPVVEEEDFDWPTACIELEQHLSRWADDGRRAEYFCLADGHFASIDSVLLLQGGTLCLSGSRDRNVNLWDLQQLGVEPSRVLVKTLGTQKNSTHKGWVWSLAALDHRVCSGSWDSTVKLWDMAADGQQFGEIKGKAAVLCLSYRPDILVTGTYDKKVTVYDPRVGPALLKSRRLHSSAVLALLADDRHIISGSEDHTLVVFDRRANSVLQRLQLDSYLLCMSYQEPQLWAGDNQGLLHVFANRSGCFQLVRSFDVGHRSQITGIKHSLGALYTTSTDKTIRVHVPTDPPRTICTRSHHNVLNGICAEGNLVVAASGGLSLEVWRLQA.

An N-acetylmethionine modification is found at Met-1. Residues Met-1–Ala-28 form a disordered region. Residues Asp-16–Ala-28 show a composition bias toward acidic residues. Phosphoserine occurs at positions 18 and 59. The F-box domain occupies Val-76–Arg-123. WD repeat units follow at residues Gly-171–Ser-210, Thr-224–Gly-261, Lys-264–Lys-301, Leu-305–Arg-342, Gln-344–Val-381, Gly-387–Cys-424, and Ser-427–Ala-458.

As to quaternary structure, interacts with SKP1 and CUL1.

In terms of biological role, substrate-recognition component of the SCF (SKP1-CUL1-F-box protein)-type E3 ubiquitin ligase complex. The chain is F-box/WD repeat-containing protein 9 (FBXW9) from Bos taurus (Bovine).